A 330-amino-acid polypeptide reads, in one-letter code: MTNNRVRVAVTGAAGQIGYALVFRIASGQMFGPNTEVELNLLELEPALPSLEGVAMELDDCAFPLLKRIVCTADLNKAMDGVNWALLVGSVPRKQGMERSDLLQINGGIFTKQGQAINDYASDDVRVFVVGNPCNTNCLIAMNHAKDVPSDRFYAMTTLDELRARTQLAKKAGVDITAVTQMTIWGNHSATQYPDFYNAKINGTSAAQVINDETWLKETFVSTVQQRGAAVIKARGSSSAASAANAIITGVNHLVTDTPAGESFSMCRRSKGEYGVDEGLIFSFPCRREHGELKVVENLEFNDFGRERFNTTLNELRSERDTVKSLGLLD.

12–18 contributes to the NAD(+) binding site; it reads GAAGQIG. Substrate contacts are provided by arginine 93 and arginine 99. Residues asparagine 106, glutamine 113, and 130–132 each bind NAD(+); that span reads VGN. Asparagine 132 and arginine 163 together coordinate substrate. The active-site Proton acceptor is the histidine 188.

Belongs to the LDH/MDH superfamily. MDH type 2 family.

It carries out the reaction (S)-malate + NAD(+) = oxaloacetate + NADH + H(+). Functionally, catalyzes the reversible oxidation of malate to oxaloacetate. In Legionella pneumophila subsp. pneumophila (strain Philadelphia 1 / ATCC 33152 / DSM 7513), this protein is Malate dehydrogenase.